The following is a 343-amino-acid chain: Geranylgeranyl pyrophosphate synthase 1 (343 aa).

The isopentenyl diphosphate site is built by lysine 43, arginine 46, and histidine 75. Residues aspartate 82 and aspartate 86 each contribute to the Mg(2+) site. Arginine 91 is a binding site for dimethylallyl diphosphate. Position 92 (arginine 92) interacts with isopentenyl diphosphate. The dimethylallyl diphosphate site is built by lysine 169, threonine 170, and glutamine 212. Aspartate 215 contacts Mg(2+). Asparagine 219, lysine 229, and lysine 239 together coordinate dimethylallyl diphosphate.

This sequence belongs to the FPP/GGPP synthase family. It depends on Mg(2+) as a cofactor.

It carries out the reaction isopentenyl diphosphate + dimethylallyl diphosphate = (2E)-geranyl diphosphate + diphosphate. The enzyme catalyses isopentenyl diphosphate + (2E)-geranyl diphosphate = (2E,6E)-farnesyl diphosphate + diphosphate. The catalysed reaction is isopentenyl diphosphate + (2E,6E)-farnesyl diphosphate = (2E,6E,10E)-geranylgeranyl diphosphate + diphosphate. Geranylgeranyl pyrophosphate synthase; part of the gene cluster 4 that mediates the biosynthesis of an isoprenoid secondary metabolite. The sequence is that of Geranylgeranyl pyrophosphate synthase 1 (GGS1) from Zymoseptoria tritici (strain CBS 115943 / IPO323) (Speckled leaf blotch fungus).